Here is a 159-residue protein sequence, read N- to C-terminus: ATP synthase subunit b 2 (159 aa).

The helical transmembrane segment at 1 to 21 threads the bilayer; sequence MDATFWALIGLIIFLAILAYL.

Belongs to the ATPase B chain family. F-type ATPases have 2 components, F(1) - the catalytic core - and F(0) - the membrane proton channel. F(1) has five subunits: alpha(3), beta(3), gamma(1), delta(1), epsilon(1). F(0) has three main subunits: a(1), b(2) and c(10-14). The alpha and beta chains form an alternating ring which encloses part of the gamma chain. F(1) is attached to F(0) by a central stalk formed by the gamma and epsilon chains, while a peripheral stalk is formed by the delta and b chains.

The protein resides in the cell inner membrane. F(1)F(0) ATP synthase produces ATP from ADP in the presence of a proton or sodium gradient. F-type ATPases consist of two structural domains, F(1) containing the extramembraneous catalytic core and F(0) containing the membrane proton channel, linked together by a central stalk and a peripheral stalk. During catalysis, ATP synthesis in the catalytic domain of F(1) is coupled via a rotary mechanism of the central stalk subunits to proton translocation. Functionally, component of the F(0) channel, it forms part of the peripheral stalk, linking F(1) to F(0). In Brucella anthropi (strain ATCC 49188 / DSM 6882 / CCUG 24695 / JCM 21032 / LMG 3331 / NBRC 15819 / NCTC 12168 / Alc 37) (Ochrobactrum anthropi), this protein is ATP synthase subunit b 2.